The following is a 307-amino-acid chain: Cyclin-dependent kinase 5 activator 1 (307 aa).

Gly-2 carries the N-myristoyl glycine lipid modification. Ser-8 is modified (phosphoserine; by CDK5). Positions 97-135 are disordered; the sequence is TFAQPPPAQPPAPPASQLSGSQTGVSSSVKKAPHPAVSS. Residues 100 to 110 show a composition bias toward pro residues; that stretch reads QPPPAQPPAPP. Residues 112–125 are compositionally biased toward polar residues; the sequence is SQLSGSQTGVSSSV. Thr-138 is modified (phosphothreonine; by CDK5).

The protein belongs to the cyclin-dependent kinase 5 activator family. As to quaternary structure, heterodimer composed of a catalytic subunit CDK5 and a regulatory subunit CDK5R1 (p25) and macromolecular complex composed of at least CDK5, CDK5R1 (p35) and CDK5RAP1 or CDK5RAP2 or CDK5RAP3. Only the heterodimer shows kinase activity. Interacts with EPHA4 and NGEF; may mediate the activation of NGEF by EPHA4. Interacts with RASGRF2. The complex p35/CDK5 interacts with CLOCK. In terms of processing, the p35 form is proteolytically cleaved by calpain, giving rise to the p25 form. P35 has a 5 to 10 fold shorter half-life compared to p25. The conversion results in deregulation of the CDK5 kinase: p25/CDK5 kinase displays an increased and altered tau phosphorylation in comparison to the p35/CDK5 kinase in vivo. Post-translationally, myristoylated. A proper myristoylation signal is essential for the proper distribution of p35. Phosphorylation at Ser-8 and Thr-138 by CDK5 prevents calpain-mediated proteolysis. In terms of processing, ubiquitinated, leading to its degradation: degradation of p35 by proteasome results in down-regulation of CDK5 activity. During this process, CDK5 phosphorylates p35 and induces its ubiquitination and subsequent degradation. Ubiquitinated by the CRL2(FEM1B) complex, which recognizes the -Gly-Leu-Asp-Arg C-degron at the C-terminus, leading to its degradation. As to expression, brain and neuron specific.

Its subcellular location is the cell membrane. The protein resides in the cell projection. The protein localises to the neuron projection. It localises to the nucleus. It is found in the cytoplasm. Its subcellular location is the perinuclear region. The protein resides in the perikaryon. In terms of biological role, p35 is a neuron specific activator of CDK5. The complex p35/CDK5 is required for neurite outgrowth and cortical lamination. Involved in dendritic spine morphogenesis by mediating the EFNA1-EPHA4 signaling. Activator of TPKII. The complex p35/CDK5 participates in the regulation of the circadian clock by modulating the function of CLOCK protein: phosphorylates CLOCK at 'Thr-451' and 'Thr-461' and regulates the transcriptional activity of the CLOCK-BMAL1 heterodimer in association with altered stability and subcellular distribution. This is Cyclin-dependent kinase 5 activator 1 (CDK5R1) from Bos taurus (Bovine).